The primary structure comprises 309 residues: Isopentenyl-diphosphate Delta-isomerase II (309 aa).

A substrate-binding site is contributed by Lys112. Residues His116 and His128 each contribute to the Mg(2+) site. The Nudix hydrolase domain maps to 126 to 278 (LLHRAFSVFL…GLKLSPWFRL (153 aa)). The substrate site is built by Arg147 and Lys151. The active site involves Cys163. Residue Ser164 participates in substrate binding. 2 residues coordinate Mg(2+): Glu223 and Glu225. Residue Glu225 is part of the active site.

It belongs to the IPP isomerase type 1 family. The cofactor is Mg(2+).

It catalyses the reaction isopentenyl diphosphate = dimethylallyl diphosphate. Its pathway is isoprenoid biosynthesis; dimethylallyl diphosphate biosynthesis; dimethylallyl diphosphate from isopentenyl diphosphate: step 1/1. The protein operates within porphyrin-containing compound metabolism; chlorophyll biosynthesis. Its function is as follows. Catalyzes the 1,3-allylic rearrangement of the homoallylic substrate isopentenyl (IPP) to its highly electrophilic allylic isomer, dimethylallyl diphosphate (DMAPP). In Camptotheca acuminata (Happy tree), this protein is Isopentenyl-diphosphate Delta-isomerase II (IPI2).